The primary structure comprises 281 residues: sn-glycerol-3-phosphate transport system permease protein UgpE (281 aa).

6 helical membrane passes run 16–36 (LILGIAVILFPLYVAFVAATL), 85–105 (FSITLGKITVSMLSAFAIVWF), 113–133 (FFWMIFITLMLPVEVRIFPTV), 142–162 (LDSYAGLTLPLMASATATFLF), 202–222 (ALFVITFIYGWNQYLWPLLII), and 247–267 (WNSVMAAMLLTLIPPVVIVLV). An ABC transmembrane type-1 domain is found at 77-268 (LLNSFVMAFS…IPPVVIVLVM (192 aa)).

It belongs to the binding-protein-dependent transport system permease family. UgpAE subfamily. As to quaternary structure, the complex is composed of two ATP-binding proteins (UgpC), two transmembrane proteins (UgpA and UgpE) and a solute-binding protein (UgpB).

The protein resides in the cell inner membrane. Part of the ABC transporter complex UgpBAEC involved in sn-glycerol-3-phosphate (G3P) import. Probably responsible for the translocation of the substrate across the membrane. This chain is sn-glycerol-3-phosphate transport system permease protein UgpE (ugpE), found in Escherichia coli O6:K15:H31 (strain 536 / UPEC).